We begin with the raw amino-acid sequence, 296 residues long: Nucleotide-binding protein Pnec_1620 (296 aa).

Position 8-15 (8-15) interacts with ATP; that stretch reads GISGSGKS. 57-60 lines the GTP pocket; it reads DARR.

It belongs to the RapZ-like family.

In terms of biological role, displays ATPase and GTPase activities. This is Nucleotide-binding protein Pnec_1620 from Polynucleobacter necessarius subsp. necessarius (strain STIR1).